The chain runs to 390 residues: Two-component response regulator ORR29 (390 aa).

The region spanning 13 to 130 (SAMVIDEDKC…TIKNLWQYVD (118 aa)) is the Response regulatory domain. The residue at position 65 (Asp-65) is a 4-aspartylphosphate. Positions 169 to 226 (KKYYLMWTPHLQKKFLHALQILGKDASPKNIKKIMGVDNIDCRQIAAHLQKHRLRLTK) form a DNA-binding region, myb-like GARP. Disordered regions lie at residues 233 to 271 (FTTDTSKDESNSRIGPAESHHVCRNASTLQPRSNTQPTE) and 303 to 339 (SKHSSDPSGDEDEQVVVGGDQDGCANEANDIDSSGDH). Polar residues predominate over residues 257 to 271 (NASTLQPRSNTQPTE).

The protein belongs to the ARR family. Type-B subfamily. In terms of processing, two-component system major event consists of a His-to-Asp phosphorelay between a sensor histidine kinase (HK) and a response regulator (RR). In plants, the His-to-Asp phosphorelay involves an additional intermediate named Histidine-containing phosphotransfer protein (HPt). This multistep phosphorelay consists of a His-Asp-His-Asp sequential transfer of a phosphate group between first a His and an Asp of the HK protein, followed by the transfer to a conserved His of the HPt protein and finally the transfer to an Asp in the receiver domain of the RR protein.

It is found in the nucleus. Transcriptional activator that binds specific DNA sequence. Functions as a response regulator involved in His-to-Asp phosphorelay signal transduction system. Phosphorylation of the Asp residue in the receiver domain activates the ability of the protein to promote the transcription of target genes. May directly activate some type-A response regulators in response to cytokinins. This is Two-component response regulator ORR29 from Oryza sativa subsp. indica (Rice).